The chain runs to 533 residues: D-3-phosphoglycerate dehydrogenase (533 aa).

Position 2 is an N-acetylalanine (Ala-2). Ser-14 carries the post-translational modification Phosphoserine. Lys-21 carries the N6-acetyllysine; alternate modification. Lys-21 is covalently cross-linked (Glycyl lysine isopeptide (Lys-Gly) (interchain with G-Cter in SUMO1); alternate). Residue Lys-21 forms a Glycyl lysine isopeptide (Lys-Gly) (interchain with G-Cter in SUMO2); alternate linkage. Lys-58 carries the post-translational modification N6-acetyllysine. Residues Thr-78, 155-156 (RI), Asp-175, Thr-207, 234-236 (CAR), and Asp-260 contribute to the NAD(+) site. Thr-78 is subject to Phosphothreonine. Arg-236 is an active-site residue. Glu-265 is a catalytic residue. Residue His-283 is the Proton donor of the active site. 283-286 (HLGA) contacts NAD(+).

This sequence belongs to the D-isomer specific 2-hydroxyacid dehydrogenase family. In terms of assembly, homotetramer.

It carries out the reaction (2R)-3-phosphoglycerate + NAD(+) = 3-phosphooxypyruvate + NADH + H(+). It catalyses the reaction (R)-2-hydroxyglutarate + NAD(+) = 2-oxoglutarate + NADH + H(+). The catalysed reaction is (S)-malate + NAD(+) = oxaloacetate + NADH + H(+). Its pathway is amino-acid biosynthesis; L-serine biosynthesis; L-serine from 3-phospho-D-glycerate: step 1/3. Catalyzes the reversible oxidation of 3-phospho-D-glycerate to 3-phosphonooxypyruvate, the first step of the phosphorylated L-serine biosynthesis pathway. Also catalyzes the reversible oxidation of 2-hydroxyglutarate to 2-oxoglutarate and the reversible oxidation of (S)-malate to oxaloacetate. This chain is D-3-phosphoglycerate dehydrogenase (PHGDH), found in Homo sapiens (Human).